Here is an 80-residue protein sequence, read N- to C-terminus: Small ribosomal subunit protein uS17 (80 aa).

Belongs to the universal ribosomal protein uS17 family. Part of the 30S ribosomal subunit.

In terms of biological role, one of the primary rRNA binding proteins, it binds specifically to the 5'-end of 16S ribosomal RNA. The protein is Small ribosomal subunit protein uS17 of Microcystis aeruginosa (strain NIES-843 / IAM M-2473).